A 982-amino-acid polypeptide reads, in one-letter code: Mitochondrial DNA mismatch repair protein mutS homolog (982 aa).

698–705 (SVNGAGKS) contributes to the ATP binding site. An HNH domain is found at 905–951 (CEICGAPADAVHHIKPKSEHKKLCNRKLNRRSNLVPVCSSCHLDIHR).

This sequence belongs to the DNA mismatch repair MutS family.

Its subcellular location is the mitochondrion. May be involved in DNA-mismatch repair. The protein is Mitochondrial DNA mismatch repair protein mutS homolog of Sarcophyton glaucum (Toadstool umbrella leather coral).